The chain runs to 293 residues: Cytidine deaminase (293 aa).

CMP/dCMP-type deaminase domains are found at residues E47 to A166 and E186 to V293. Substrate is bound at residue N88–E90. H101 lines the Zn(2+) pocket. Catalysis depends on E103, which acts as the Proton donor. Zn(2+) is bound by residues C128 and C131.

This sequence belongs to the cytidine and deoxycytidylate deaminase family. As to quaternary structure, homodimer. The cofactor is Zn(2+).

The enzyme catalyses cytidine + H2O + H(+) = uridine + NH4(+). The catalysed reaction is 2'-deoxycytidine + H2O + H(+) = 2'-deoxyuridine + NH4(+). Its function is as follows. This enzyme scavenges exogenous and endogenous cytidine and 2'-deoxycytidine for UMP synthesis. This is Cytidine deaminase from Aeromonas salmonicida (strain A449).